A 168-amino-acid chain; its full sequence is MEPPSRHAGTDIIIEDARWRASVPGTERAIRRALVAVARQGGPDFTQSPAPSILLATDRIVKRLNARFRDKNKPTNVLTFEPLSPMHGGDIVLGYETVRREAAAARRSLRAHLSHLVVHGALHLAGYDHHHPGEAREMEGIETRTLRSLGFGDPWRQGNWQQAGSVRI.

The Zn(2+) site is built by H119, H123, and H129.

The protein belongs to the endoribonuclease YbeY family. The cofactor is Zn(2+).

The protein localises to the cytoplasm. Functionally, single strand-specific metallo-endoribonuclease involved in late-stage 70S ribosome quality control and in maturation of the 3' terminus of the 16S rRNA. The protein is Endoribonuclease YbeY of Gluconobacter oxydans (strain 621H) (Gluconobacter suboxydans).